The primary structure comprises 310 residues: Acetyl-coenzyme A carboxylase carboxyl transferase subunit beta (310 aa).

The CoA carboxyltransferase N-terminal domain maps to 27–296 (LWRKCPNCEA…QDRDAEPDDT (270 aa)). Cys-31, Cys-34, Cys-50, and Cys-53 together coordinate Zn(2+). The C4-type zinc-finger motif lies at 31–53 (CPNCEAVLYLPELERHQSVCPKC). The tract at residues 282–310 (THQPHQDRDAEPDDTASQSTLDEFSQADH) is disordered.

Belongs to the AccD/PCCB family. Acetyl-CoA carboxylase is a heterohexamer composed of biotin carboxyl carrier protein (AccB), biotin carboxylase (AccC) and two subunits each of ACCase subunit alpha (AccA) and ACCase subunit beta (AccD). Requires Zn(2+) as cofactor.

The protein resides in the cytoplasm. It catalyses the reaction N(6)-carboxybiotinyl-L-lysyl-[protein] + acetyl-CoA = N(6)-biotinyl-L-lysyl-[protein] + malonyl-CoA. Its pathway is lipid metabolism; malonyl-CoA biosynthesis; malonyl-CoA from acetyl-CoA: step 1/1. Its function is as follows. Component of the acetyl coenzyme A carboxylase (ACC) complex. Biotin carboxylase (BC) catalyzes the carboxylation of biotin on its carrier protein (BCCP) and then the CO(2) group is transferred by the transcarboxylase to acetyl-CoA to form malonyl-CoA. This is Acetyl-coenzyme A carboxylase carboxyl transferase subunit beta from Chromohalobacter salexigens (strain ATCC BAA-138 / DSM 3043 / CIP 106854 / NCIMB 13768 / 1H11).